A 478-amino-acid chain; its full sequence is ATP synthase subunit beta (478 aa).

160-167 serves as a coordination point for ATP; that stretch reads GGAGVGKT.

The protein belongs to the ATPase alpha/beta chains family. In terms of assembly, F-type ATPases have 2 components, CF(1) - the catalytic core - and CF(0) - the membrane proton channel. CF(1) has five subunits: alpha(3), beta(3), gamma(1), delta(1), epsilon(1). CF(0) has three main subunits: a(1), b(2) and c(9-12). The alpha and beta chains form an alternating ring which encloses part of the gamma chain. CF(1) is attached to CF(0) by a central stalk formed by the gamma and epsilon chains, while a peripheral stalk is formed by the delta and b chains.

The protein resides in the cell inner membrane. It carries out the reaction ATP + H2O + 4 H(+)(in) = ADP + phosphate + 5 H(+)(out). Functionally, produces ATP from ADP in the presence of a proton gradient across the membrane. The catalytic sites are hosted primarily by the beta subunits. The polypeptide is ATP synthase subunit beta (Orientia tsutsugamushi (strain Ikeda) (Rickettsia tsutsugamushi)).